The sequence spans 212 residues: Thymidylate kinase (212 aa).

11 to 18 (GPDGAGKS) serves as a coordination point for ATP.

The protein belongs to the thymidylate kinase family.

The enzyme catalyses dTMP + ATP = dTDP + ADP. Phosphorylation of dTMP to form dTDP in both de novo and salvage pathways of dTTP synthesis. The sequence is that of Thymidylate kinase from Streptococcus gordonii (strain Challis / ATCC 35105 / BCRC 15272 / CH1 / DL1 / V288).